A 143-amino-acid chain; its full sequence is Hemoglobin subunit alpha-1 (143 aa).

Residue serine 2 is modified to N-acetylserine. A Globin domain is found at 2 to 143; that stretch reads SLSSKDKATV…LALALAEKYR (142 aa). Histidine 60 serves as a coordination point for O2. Histidine 89 contributes to the heme b binding site.

This sequence belongs to the globin family. As to quaternary structure, hb 1 is a heterotetramer of two alpha-1 and two beta-1 chains. In terms of tissue distribution, red blood cells.

Its function is as follows. Involved in oxygen transport from gills to the various peripheral tissues. This is Hemoglobin subunit alpha-1 (hba1) from Arctogadus glacialis (Arctic cod).